The sequence spans 357 residues: Maleylacetate reductase 1 (357 aa).

Belongs to the iron-containing alcohol dehydrogenase family.

The enzyme catalyses 3-oxoadipate + NAD(+) = maleylacetate + NADH + H(+). The catalysed reaction is 3-oxoadipate + NADP(+) = maleylacetate + NADPH + H(+). Its pathway is aromatic compound metabolism; 3-chlorocatechol degradation. Functionally, plays a major role in the degradation of chloroaromatic compounds by channeling maleylacetate and some of its substituted derivatives into the 3-oxoadipate pathway. This enzyme converts maleylacetate and 2-chloromaleylacetate with similar efficiencies. This chain is Maleylacetate reductase 1 (macA), found in Rhodococcus opacus (Nocardia opaca).